The primary structure comprises 234 residues: HTH-type transcriptional regulator ArcR (234 aa).

Residue 40-129 participates in a nucleoside 3',5'-cyclic phosphate binding; that stretch reads VRHYTKGQVI…MAFLCKANDD (90 aa). One can recognise an HTH crp-type domain in the interval 155–228; the sequence is KFAKDRIIKL…HKNWLVSKHL (74 aa). Residues 188-207 constitute a DNA-binding region (H-T-H motif); the sequence is IQLMSDMAGISRETAGHIIH.

The protein localises to the cytoplasm. In terms of biological role, positively regulates the expression of the arcABDCR operon under anaerobic conditions, thus playing an essential role in arginine catabolism. May also control the expression of genes encoding proteins which are involved in anaerobic metabolism. Can bind cyclic AMP. This Staphylococcus aureus (strain Mu50 / ATCC 700699) protein is HTH-type transcriptional regulator ArcR (arcR).